Consider the following 2753-residue polypeptide: Maltase-glucoamylase (2753 aa).

Over Met1 to Glu13 the chain is Cytoplasmic. The chain crosses the membrane as a helical; Signal-anchor for type II membrane protein span at residues Ile14–Leu34. Over Ala35–Leu2753 the chain is Lumenal. A disordered region spans residues Ser41–Ser87. The segment covering Pro44 to Pro85 has biased composition (low complexity). The 47-residue stretch at Ala88–Lys134 folds into the P-type 1 domain. Disulfide bonds link Cys90–Cys118, Cys101–Cys117, and Cys112–Cys130. N-linked (GlcNAc...) asparagine glycosylation is present at Asn135. Asp289 is an acarbose binding site. Asn295 carries an N-linked (GlcNAc...) asparagine glycan. Residues Pro356 to Val737 are maltase. Acarbose is bound at residue Asp413. Sulfotyrosine is present on residues Tyr416 and Tyr425. N-linked (GlcNAc...) asparagine glycans are attached at residues Asn457, Asn458, and Asn479. Asp529 serves as the catalytic Nucleophile. Glu532 is an active-site residue. Residues Arg612 and Asp628 each coordinate acarbose. The cysteines at positions 659 and 670 are disulfide-linked. Acarbose is bound at residue His686. Asn707, Asn749, Asn827, Asn885, Asn912, Asn977, Asn989, and Asn1255 each carry an N-linked (GlcNAc...) asparagine glycan. The P-type 2 domain maps to Trp954 to Asn1000. 2 disulfide bridges follow: Cys966–Cys983 and Cys978–Cys996. The tract at residues Thr1221–Thr1632 is glucoamylase. Tyr1282 is subject to Sulfotyrosine. N-linked (GlcNAc...) asparagine glycosylation is found at Asn1323, Asn1364, and Asn1388. Residue Asp1420 is the Nucleophile of the active site. Residue Glu1423 is part of the active site. Asp1526 (proton donor) is an active-site residue. Positions Trp1850–Asn1896 constitute a P-type 3 domain. 2 disulfides stabilise this stretch: Cys1862–Cys1879 and Cys1874–Cys1892. N-linked (GlcNAc...) asparagine glycans are attached at residues Asn2499, Asn2568, Asn2738, and Asn2743.

It belongs to the glycosyl hydrolase 31 family. In terms of assembly, monomer. In terms of processing, N- and O-glycosylated. Post-translationally, does not undergo intracellular or extracellular proteolytic cleavage. Sulfated. As to expression, broadly expressed. Highly expressed in small intestine. Expressed in granulocytes.

It is found in the apical cell membrane. The catalysed reaction is Hydrolysis of terminal, non-reducing (1-&gt;4)-linked alpha-D-glucose residues with release of alpha-D-glucose.. The enzyme catalyses D-maltoheptaose + H2O = D-maltohexaose + alpha-D-glucose. It carries out the reaction D-maltohexaose + H2O = D-maltopentaose + alpha-D-glucose. It catalyses the reaction D-maltopentaose + H2O = D-maltotetraose + alpha-D-glucose. The catalysed reaction is D-maltotetraose + H2O = D-maltotriose + alpha-D-glucose. The enzyme catalyses D-maltotriose + H2O = D-maltose + alpha-D-glucose. It carries out the reaction D-maltose + H2O = alpha-D-glucose + D-glucose. It catalyses the reaction nigerose + H2O = alpha-D-glucose + D-glucose. The catalysed reaction is kojibiose + H2O = alpha-D-glucose + D-glucose. The enzyme catalyses isomaltose + H2O = alpha-D-glucose + D-glucose. It carries out the reaction 6-O-alpha-D-glucopyranosyl-D-fructose + H2O = alpha-D-glucose + D-fructose. The protein operates within carbohydrate degradation. Down-regulated at high oligomaltose concentration as it occurs during the mealtime. Down-regulated by anti-diabetic drug acarbose. Alpha-(1,4) exo-glucosidase involved in breakdown of dietary starch oligosaccharides in small intestine. Cleaves the non-reducing alpha-(1,4)-linked glucose residue in linear dextrins with retention of anomeric center stereochemistry. Mainly hydrolyzes short length oligomaltoses having two to seven glucose residues. Can cleave alpha-(1,2), alpha-(1,3) and alpha-(1,6) glycosidic linkages with lower efficiency, whereas beta glycosidic linkages are usually not hydrolyzed. This is Maltase-glucoamylase from Homo sapiens (Human).